A 537-amino-acid polypeptide reads, in one-letter code: Actin-histidine N-methyltransferase (537 aa).

The segment covering 1-12 (MGKNTKRNKKTK) has biased composition (basic residues). Residues 1-50 (MGKNTKRNKKTKQQQQQPQQNGVTASASGTAVEDFEDQQAASSLPSLNGK) form a disordered region. S-adenosyl-L-methionine is bound by residues R114, 143 to 145 (YQL), R299, 325 to 329 (DMANH), and 375 to 377 (NGF). The region spanning 133–364 (EGLEIAIFPG…TGEQFFIYYG (232 aa)) is the SET domain.

The protein belongs to the class V-like SAM-binding methyltransferase superfamily. SETD3 actin-histidine methyltransferase family.

Its subcellular location is the cytoplasm. It localises to the nucleus. The catalysed reaction is L-histidyl-[protein] + S-adenosyl-L-methionine = N(tele)-methyl-L-histidyl-[protein] + S-adenosyl-L-homocysteine + H(+). Functionally, protein-histidine N-methyltransferase that specifically mediates 3-methylhistidine (tele-methylhistidine) methylation of actin at 'His-74'. The chain is Actin-histidine N-methyltransferase from Drosophila melanogaster (Fruit fly).